A 299-amino-acid chain; its full sequence is Apolipoprotein E (299 aa).

The first 18 residues, 1-18 (MKVLCTVLVVTLLAGCQA), serve as a signal peptide directing secretion. The 8 X 22 AA approximate tandem repeats stretch occupies residues 74–245 (VLMEDTMKAV…RLEEVREQME (172 aa)). A run of 8 repeats spans residues 75-95 (LMED…QELV), 96-117 (PMAE…ARLG), 118-139 (ADME…AMLG), 140-161 (QSAE…KKLL), 162-183 (RDAE…EGAE), 184-206 (RSVS…RAAL), 207-225 (TSQP…LRGR), and 224-242 (GRLE…EVRE). Met-137 is subject to Methionine sulfoxide. Position 141 is a phosphoserine (Ser-141). The interval 152 to 162 (HLRKLRKKLLR) is LDL and other lipoprotein receptors binding. 156–159 (LRKK) contacts heparin. The tract at residues 205–273 (ALTSQPLQER…GWFEPMVEDM (69 aa)) is lipid-binding and lipoprotein association. 219–226 (GKRLRGRL) is a binding site for heparin. A specificity for association with VLDL region spans residues 261 to 273 (RLKGWFEPMVEDM).

It belongs to the apolipoprotein A1/A4/E family. In terms of assembly, homotetramer. May interact with ABCA1; functionally associated with ABCA1 in the biogenesis of HDLs. May interact with APP/A4 amyloid-beta peptide; the interaction is extremely stable in vitro but its physiological significance is unclear. May interact with MAPT. May interact with MAP2. In the cerebrospinal fluid, interacts with secreted SORL1. Interacts with PMEL; this allows the loading of PMEL luminal fragment on ILVs to induce fibril nucleation. APOE exists as multiple glycosylated and sialylated glycoforms within cells and in plasma. The extent of glycosylation and sialylation are tissue and context specific. In terms of processing, glycated in plasma VLDL. Post-translationally, phosphorylated by FAM20C in the extracellular medium.

It is found in the secreted. The protein localises to the extracellular space. Its subcellular location is the extracellular matrix. It localises to the extracellular vesicle. The protein resides in the endosome. It is found in the multivesicular body. APOE is an apolipoprotein, a protein associating with lipid particles, that mainly functions in lipoprotein-mediated lipid transport between organs via the plasma and interstitial fluids. APOE is a core component of plasma lipoproteins and is involved in their production, conversion and clearance. Apolipoproteins are amphipathic molecules that interact both with lipids of the lipoprotein particle core and the aqueous environment of the plasma. As such, APOE associates with chylomicrons, chylomicron remnants, very low density lipoproteins (VLDL) and intermediate density lipoproteins (IDL) but shows a preferential binding to high-density lipoproteins (HDL). It also binds a wide range of cellular receptors including the LDL receptor/LDLR, the LDL receptor-related proteins LRP1, LRP2 and LRP8 and the very low-density lipoprotein receptor/VLDLR that mediate the cellular uptake of the APOE-containing lipoprotein particles. Finally, APOE also has a heparin-binding activity and binds heparan-sulfate proteoglycans on the surface of cells, a property that supports the capture and the receptor-mediated uptake of APOE-containing lipoproteins by cells. A main function of APOE is to mediate lipoprotein clearance through the uptake of chylomicrons, VLDLs, and HDLs by hepatocytes. APOE is also involved in the biosynthesis by the liver of VLDLs as well as their uptake by peripheral tissues ensuring the delivery of triglycerides and energy storage in muscle, heart and adipose tissues. By participating in the lipoprotein-mediated distribution of lipids among tissues, APOE plays a critical role in plasma and tissues lipid homeostasis. APOE is also involved in two steps of reverse cholesterol transport, the HDLs-mediated transport of cholesterol from peripheral tissues to the liver, and thereby plays an important role in cholesterol homeostasis. First, it is functionally associated with ABCA1 in the biogenesis of HDLs in tissues. Second, it is enriched in circulating HDLs and mediates their uptake by hepatocytes. APOE also plays an important role in lipid transport in the central nervous system, regulating neuron survival and sprouting. This is Apolipoprotein E (APOE) from Ctenomys sociabilis (Social tuco-tuco).